The chain runs to 304 residues: MATH domain and coiled-coil domain-containing protein At2g42470 (304 aa).

An MATH domain is found at 6–123 (QTSFTFEIDN…NNKLIIEVQV (118 aa)). A coiled-coil region spans residues 219–292 (FKVDWLKKKL…LKIELDRTRR (74 aa)).

The sequence is that of MATH domain and coiled-coil domain-containing protein At2g42470 from Arabidopsis thaliana (Mouse-ear cress).